The sequence spans 578 residues: Frizzled and smoothened-like protein Q (578 aa).

An N-terminal signal peptide occupies residues 1–23; it reads MKNSFLINILIIYYLFIILFVNS. At 24-233 the chain is on the extracellular side; that stretch reads QDLKLGGSCE…GKTKILDRTN (210 aa). The FZ domain occupies 27–157; the sequence is KLGGSCELID…GAPMFPINST (131 aa). 4 cysteine pairs are disulfide-bonded: Cys32-Cys95, Cys41-Cys88, Cys79-Cys128, and Cys121-Cys141. Residues Asn46, Asn64, Asn99, and Asn104 are each glycosylated (N-linked (GlcNAc...) asparagine). N-linked (GlcNAc...) asparagine glycans are attached at residues Asn144, Asn155, Asn181, and Asn233. Residues 234 to 254 traverse the membrane as a helical segment; that stretch reads YTLTSISFITCIFMILTFGVL. The Cytoplasmic segment spans residues 255 to 261; sequence PNKITHR. The helical transmembrane segment at 262–282 threads the bilayer; the sequence is MESILSFACGGCITALSLFIQ. Residues 283–305 lie on the Extracellular side of the membrane; that stretch reads SRQDNFNCSSDPGRFKSQSDYLC. Asn289 carries N-linked (GlcNAc...) asparagine glycosylation. The chain crosses the membrane as a helical span at residues 306–326; the sequence is LLTGLIFQFGAITSIFWSPMI. Residues 327-341 are Cytoplasmic-facing; the sequence is AYDFYITSTLGKIRK. The helical transmembrane segment at 342–362 threads the bilayer; it reads FGLYRIVLWSFIFVLTALPAF. The Extracellular portion of the chain corresponds to 363–388; the sequence is GGKYSATVATNCWINSDDGSAWQYVS. Residues 389-409 form a helical membrane-spanning segment; sequence FYIPSWCAMGLICLFSILSVI. Over 410–422 the chain is Cytoplasmic; that stretch reads NVSKMYIQTPNNR. The helical transmembrane segment at 423-443 threads the bilayer; it reads ILFFNIKILITLLLFLFVLTF. Topologically, residues 444–490 are extracellular; sequence ASSLKFYMEERMDTYFDAIAVWVECIGKGDPSQCELHAPGYDLKALN. Residues 491-511 traverse the membrane as a helical segment; that stretch reads IVVIGILGFTVFIGYGLDPIV. Residues 512–578 lie on the Cytoplasmic side of the membrane; sequence IHIWMESKKF…LKSTEINQQP (67 aa). Residues 544–556 show a composition bias toward low complexity; it reads NNNNNETASTSSG. The interval 544–578 is disordered; it reads NNNNNETASTSSGNERKQTTVKMSNLKSTEINQQP. Positions 563–578 are enriched in polar residues; the sequence is TVKMSNLKSTEINQQP.

It belongs to the G-protein coupled receptor Fz/Smo family.

It localises to the membrane. This Dictyostelium discoideum (Social amoeba) protein is Frizzled and smoothened-like protein Q (fslQ).